The chain runs to 90 residues: Phaiodotoxin (90 aa).

Residues 1–18 form the signal peptide; that stretch reads MKTIPLLFLLFIYFECDG. In terms of domain architecture, LCN-type CS-alpha/beta spans 19–90; the sequence is KFIRHKDESF…CFGALESKCA (72 aa). 4 cysteine pairs are disulfide-bonded: cysteine 31–cysteine 56, cysteine 41–cysteine 68, cysteine 45–cysteine 70, and cysteine 81–cysteine 89.

In terms of tissue distribution, expressed by the venom gland.

Its subcellular location is the secreted. Its function is as follows. Sodium channel (Nav) specific neurotoxin. Causes impairment of movement and mild paralysis in crickets at a dose of 0.5 ug per animal. A dose of 0.8 ug per cricket causes clear flaccid paralysis. A dose of 1.0 ug per cricket causes death within 2 hours. Is not toxic to mice at a dose of 100 ug per 20 g mouse weight. This Anuroctonus phaiodactylus (Mafia scorpion) protein is Phaiodotoxin.